We begin with the raw amino-acid sequence, 476 residues long: Protein transport protein Sec61 subunit alpha isoform 1 (476 aa).

Residues 1–33 (MAIKFLEVIKPFCVILPEIQKPERKIQFKEKVL) lie on the Cytoplasmic side of the membrane. A helical membrane pass occupies residues 34–53 (WTAITLFIFLVCCQIPLFGI). The Lumenal portion of the chain corresponds to 54–76 (MSSDSADPFYWMRVILASNRGTL). Residues 77–96 (MELGISPIVTSGLIMQLLAG) form a helical membrane-spanning segment. The Cytoplasmic segment spans residues 97–117 (AKIIEVGDTPKDRALFNGAQK). A helical membrane pass occupies residues 118–138 (LFGMIITIGQSIVYVMTGMYG). The Lumenal segment spans residues 139–144 (DPSEMG). Residues 145 to 165 (AGICLLITIQLFVAGLIVLLL) form a helical membrane-spanning segment. Residues 166 to 172 (DELLQKG) lie on the Cytoplasmic side of the membrane. The helical transmembrane segment at 173–193 (YGLGSGISLFIATNICETIVW) threads the bilayer. The Lumenal segment spans residues 194–240 (KAFSPTTVNTGRGMEFEGAIIALFHLLATRTDKVRALREAFYRQNLP). Residues 241-261 (NLMNLIATIFVFAVVIYFQGF) traverse the membrane as a helical segment. Topologically, residues 262–288 (RVDLPIKSARYRGQYNTYPIKLFYTSN) are cytoplasmic. Residues 289–309 (IPIILQSALVSNLYVISQMLS) form a helical membrane-spanning segment. Over 310-354 (ARFSGNLLVSLLGTWSDTSSGGPARAYPVGGLCYYLSPPESFGSV) the chain is Lumenal. A helical membrane pass occupies residues 355–375 (LEDPVHAVVYIVFMLGSCAFF). The Cytoplasmic segment spans residues 376-420 (SKTWIEVSGSSAKDVAKQLKEQQMVMRGHRETSMVHELNRYIPTA). The chain crosses the membrane as a helical span at residues 421–441 (AAFGGLCIGALSVLADFLGAI). Over 442 to 445 (GSGT) the chain is Lumenal. A helical membrane pass occupies residues 446–462 (GILLAVTIIYQYFEIFV). The Cytoplasmic portion of the chain corresponds to 463-476 (KEQSEVGSMGALLF).

The protein belongs to the SecY/SEC61-alpha family. In terms of assembly, the SEC61 channel-forming translocon complex consists of channel-forming core components SEC61A1, SEC61B and SEC61G and different auxiliary components such as SEC62 and SEC63. The SEC61 channel associates with the multi-pass translocon (MPT) complex. Expressed in proximal and distal tubules in kidney (at protein level).

The protein localises to the endoplasmic reticulum membrane. Component of SEC61 channel-forming translocon complex that mediates transport of signal peptide-containing precursor polypeptides across the endoplasmic reticulum (ER). Forms a ribosome receptor and a gated pore in the ER membrane, both functions required for cotranslational translocation of nascent polypeptides. May cooperate with auxiliary protein SEC62, SEC63 and HSPA5/BiP to enable post-translational transport of small presecretory proteins. The SEC61 channel is also involved in ER membrane insertion of transmembrane proteins: it mediates membrane insertion of the first few transmembrane segments of proteins, while insertion of subsequent transmembrane regions of multi-pass membrane proteins is mediated by the multi-pass translocon (MPT) complex. The SEC61 channel cooperates with the translocating protein TRAM1 to import nascent proteins into the ER. Controls the passive efflux of calcium ions from the ER lumen to the cytosol through SEC61 channel, contributing to the maintenance of cellular calcium homeostasis. Plays a critical role in nephrogenesis, specifically at pronephros stage. The protein is Protein transport protein Sec61 subunit alpha isoform 1 (SEC61A1) of Homo sapiens (Human).